A 241-amino-acid polypeptide reads, in one-letter code: Major prion protein (241 aa).

A signal peptide spans 1–15; that stretch reads MLVLFVATWSDLGLC. Positions 16–31 are interaction with ADGRG6; it reads KKRPKPGGWNTGGSRY. The tract at residues 16–223 is interaction with GRB2, ERI3 and SYN1; it reads KKRPKPGGWN…ESQAYYQRGS (208 aa). Residues 18–100 form a disordered region; the sequence is RPKPGGWNTG…QWNKPSKPKT (83 aa). 5 repeat units span residues 44 to 52, 53 to 60, 61 to 68, 69 to 76, and 77 to 84. The interval 44–84 is 5 X 8 AA tandem repeats of P-H-G-G-G-W-G-Q; sequence PQGGGSWGQPHGGGWGQPHGGGWGQPHGGGWGQPHGGGWGQ. A compositionally biased stretch (gly residues) spans 45–88; it reads QGGGSWGQPHGGGWGQPHGGGWGQPHGGGWGQPHGGGWGQGGGT. Residues His-54, Gly-55, Gly-56, His-62, Gly-63, Gly-64, His-70, Gly-71, Gly-72, His-78, Gly-79, and Gly-80 each contribute to the Cu(2+) site. Cysteines 172 and 207 form a disulfide. N-linked (GlcNAc...) asparagine glycans are attached at residues Asn-174 and Asn-190. Ser-223 carries GPI-anchor amidated serine lipidation. Positions 224–241 are cleaved as a propeptide — removed in mature form; it reads SMVLFSSPPVILLISFLI.

Belongs to the prion family. In terms of assembly, monomer and homodimer. Has a tendency to aggregate into amyloid fibrils containing a cross-beta spine, formed by a steric zipper of superposed beta-strands. Soluble oligomers may represent an intermediate stage on the path to fibril formation. Copper binding may promote oligomerization. Interacts with GRB2, APP, ERI3/PRNPIP and SYN1. Mislocalized cytosolically exposed PrP interacts with MGRN1; this interaction alters MGRN1 subcellular location and causes lysosomal enlargement. Interacts with APP. Interacts with KIAA1191. Interacts with ADGRG6.

The protein resides in the cell membrane. It localises to the golgi apparatus. In terms of biological role, its primary physiological function is unclear. May play a role in neuronal development and synaptic plasticity. May be required for neuronal myelin sheath maintenance. May promote myelin homeostasis through acting as an agonist for ADGRG6 receptor. May play a role in iron uptake and iron homeostasis. Soluble oligomers are toxic to cultured neuroblastoma cells and induce apoptosis (in vitro). Association with GPC1 (via its heparan sulfate chains) targets PRNP to lipid rafts. Also provides Cu(2+) or Zn(2+) for the ascorbate-mediated GPC1 deaminase degradation of its heparan sulfate side chains. This Plecturocebus moloch (Dusky titi monkey) protein is Major prion protein (PRNP).